We begin with the raw amino-acid sequence, 479 residues long: Protoheme IX farnesyltransferase (479 aa).

The interval 1–207 is unknown; that stretch reads MAEQTATTTS…AYIRLTKPRL (207 aa). Helical transmembrane passes span 20 to 40, 64 to 84, 98 to 118, and 128 to 148; these read LLAG…TTAV, IGWL…CAVV, VLIT…VGAV, and LSVI…IALA. Over residues 155–164 the composition is skewed to low complexity; it reads TGDPTETQTT. The tract at residues 155-186 is disordered; the sequence is TGDPTETQTTPSKPEPDQDLPPASEYDPDLPA. 9 helical membrane-spanning segments follow: residues 207–227, 231–251, 271–291, 303–322, 324–344, 345–365, 402–422, 423–443, and 459–479; these read LMWL…TTTG, PGIA…SGTF, LATD…LTVI, AAIL…TLLL, PNTV…ALIG, WVAV…VIFL, HVIW…TIEA, LGIV…YFAI, and HASN…TLVI. Residues 208–476 are protoheme IX prenyltransferase; the sequence is MWLLCLVASA…AVLIAIVFDT (269 aa).

The protein in the C-terminal section; belongs to the UbiA prenyltransferase family. Protoheme IX farnesyltransferase subfamily.

The protein resides in the cell membrane. The catalysed reaction is heme b + (2E,6E)-farnesyl diphosphate + H2O = Fe(II)-heme o + diphosphate. It participates in porphyrin-containing compound metabolism; heme O biosynthesis; heme O from protoheme: step 1/1. Functionally, converts heme B (protoheme IX) to heme O by substitution of the vinyl group on carbon 2 of heme B porphyrin ring with a hydroxyethyl farnesyl side group. The sequence is that of Protoheme IX farnesyltransferase (ctaB) from Haloquadratum walsbyi (strain DSM 16790 / HBSQ001).